We begin with the raw amino-acid sequence, 375 residues long: MQCEFFIQKRCTSCHQCAQPYSQQVENKDQQLRELIAPAMDVQWLPPVTSADTAFRNKAKMVVLGAAHAPILGIEDAQGQPLSLVTCPLYPQPMQELLAYLENWIRIAGIPPYNKLKKKGELKFILLTRSENSGQFMLRFVARSHAVLERIERNLPTLIAAFPTIEVVSVNIQPVHMARLEGEEEIFLTETQSLLEQFNDVPMVIRPKSFFQTNPQVAEQLYATARAWVREIAPTQMWDLFCGVGGFALHCAAPNTAVTGIEIEPEAIASAQRSAQMMGIDNLSFAALDSAKFSQSQMSAPELVLVNPPRRGLGSELTAQLEALAPQHILYSSCNPQTMVKDIAELASYQMSRVQWFDMFPHTDHAEVLTLLVRK.

Positions 3, 11, 14, and 87 each coordinate [4Fe-4S] cluster. Residues Gln-212, Phe-241, Glu-262, and Asn-307 each contribute to the S-adenosyl-L-methionine site. Cys-334 functions as the Nucleophile in the catalytic mechanism.

The protein belongs to the class I-like SAM-binding methyltransferase superfamily. RNA M5U methyltransferase family. RlmC subfamily.

It carries out the reaction uridine(747) in 23S rRNA + S-adenosyl-L-methionine = 5-methyluridine(747) in 23S rRNA + S-adenosyl-L-homocysteine + H(+). In terms of biological role, catalyzes the formation of 5-methyl-uridine at position 747 (m5U747) in 23S rRNA. The polypeptide is 23S rRNA (uracil(747)-C(5))-methyltransferase RlmC (Vibrio cholerae serotype O1 (strain ATCC 39541 / Classical Ogawa 395 / O395)).